The primary structure comprises 453 residues: 3-phosphoshikimate 1-carboxyvinyltransferase (453 aa).

The segment at 1-27 is disordered; the sequence is MSHDSEPQPVTATPGGPLNGSLKPPGD. Positions 28, 29, and 33 each coordinate 3-phosphoshikimate. Lys-28 lines the phosphoenolpyruvate pocket. The phosphoenolpyruvate site is built by Gly-101 and Arg-129. Residues Ser-175, Gln-177, Asp-330, and Lys-357 each coordinate 3-phosphoshikimate. Gln-177 serves as a coordination point for phosphoenolpyruvate. Asp-330 acts as the Proton acceptor in catalysis. Phosphoenolpyruvate is bound by residues Arg-361 and Arg-405.

Belongs to the EPSP synthase family. In terms of assembly, monomer.

It is found in the cytoplasm. It carries out the reaction 3-phosphoshikimate + phosphoenolpyruvate = 5-O-(1-carboxyvinyl)-3-phosphoshikimate + phosphate. Its pathway is metabolic intermediate biosynthesis; chorismate biosynthesis; chorismate from D-erythrose 4-phosphate and phosphoenolpyruvate: step 6/7. Catalyzes the transfer of the enolpyruvyl moiety of phosphoenolpyruvate (PEP) to the 5-hydroxyl of shikimate-3-phosphate (S3P) to produce enolpyruvyl shikimate-3-phosphate and inorganic phosphate. This is 3-phosphoshikimate 1-carboxyvinyltransferase from Methylorubrum extorquens (strain CM4 / NCIMB 13688) (Methylobacterium extorquens).